Reading from the N-terminus, the 1008-residue chain is Retinoblastoma-related protein (1008 aa).

The disordered stretch occupies residues 375-394 (KRKVDSMTSPTKTITSPLSP). Residues 380–392 (SMTSPTKTITSPL) show a composition bias toward polar residues. Positions 404–605 (TPVSTAMTTA…EKGSSMYNSL (202 aa)) are domain A. The tract at residues 404–853 (TPVSTAMTTA…NEVFIPSVKP (450 aa)) is pocket. The interval 606 to 722 (TIARPNLSNE…HPTRGETCGE (117 aa)) is spacer. The tract at residues 723-853 (TAVNLFFSKI…NEVFIPSVKP (131 aa)) is domain B. Disordered stretches follow at residues 865 to 899 (KNPNNQVSDSNKKDESGPCPCPGSPKVSSFPSLPD) and 988 to 1008 (LQNGQNGKGPSSSSGQELKTE).

The protein belongs to the retinoblastoma protein (RB) family.

Its subcellular location is the nucleus. Regulator of biological processes that recruits a histone deacetylase to control gene transcription. May play a role in the entry into mitosis, negatively regulating the cell proliferation. Formation of stable complexes with geminiviridae replication-associated proteins may create a cellular environment which favors viral DNA replication. The sequence is that of Retinoblastoma-related protein (RBR) from Pilosella officinarum (Mouse-ear hawkweed).